We begin with the raw amino-acid sequence, 326 residues long: Glycine N(alpha)-acyltransferase (326 aa).

This sequence belongs to the acetyltransferase family.

The enzyme catalyses a (3R)-hydroxyacyl-[ACP] + glycine = a lyso-glycine lipid + holo-[ACP] + H(+). It carries out the reaction (3R)-hydroxyhexadecanoyl-[ACP] + glycine = N-[(3R)-3-hydroxyhexadecanoyl]-glycine + holo-[ACP] + H(+). Its pathway is lipid metabolism. Functionally, is involved in the production of glycine lipids (GL), which are phosphorus-free membrane lipids. Catalyzes the first step of GL biosynthesis, i.e. the N-acylation of glycine via addition of a 3-hydroxy fatty acyl group, to form a range of monoacylated glycine (also named lyso-glycine lipids or lyso-GL). As an example, catalyzes the production of commendamide, an N-acylated (3-OH C16:0) derivative of glycine with hemolytic activity and the ability to solubilize cholesterol micelles; this compound can also activate NF-kB through the G-protein coupled receptor GPCR G2A/132. This is Glycine N(alpha)-acyltransferase from Phocaeicola vulgatus (strain ATCC 8482 / DSM 1447 / JCM 5826 / CCUG 4940 / NBRC 14291 / NCTC 11154) (Bacteroides vulgatus).